The chain runs to 215 residues: Probable transaldolase (215 aa).

The Schiff-base intermediate with substrate role is filled by Lys-84.

Belongs to the transaldolase family. Type 3B subfamily.

The protein resides in the cytoplasm. The enzyme catalyses D-sedoheptulose 7-phosphate + D-glyceraldehyde 3-phosphate = D-erythrose 4-phosphate + beta-D-fructose 6-phosphate. It functions in the pathway carbohydrate degradation; pentose phosphate pathway; D-glyceraldehyde 3-phosphate and beta-D-fructose 6-phosphate from D-ribose 5-phosphate and D-xylulose 5-phosphate (non-oxidative stage): step 2/3. In terms of biological role, transaldolase is important for the balance of metabolites in the pentose-phosphate pathway. This is Probable transaldolase from Exiguobacterium sibiricum (strain DSM 17290 / CCUG 55495 / CIP 109462 / JCM 13490 / 255-15).